A 757-amino-acid chain; its full sequence is MRFNQYSYINFPKENVLSELKKCGFDLQNTANHKDSLETFLRRFFFTYQDTNYPLSILAADKKTDLLTFFQSEDELTADIFYTVAFQLLGFSYLVDFEDSDVFRKETGFPIIYGDLIENLYQLLNTRTKKGNTLIDQLVSDGLIPEDNDYHYFNGKSLATFSNQDVIREVVYVESRVDTDQKGLSDLVKVSIIRPRFDGKIPAIMTASPYHQGTNDKASDKALYKMEGELEVKLPHKIELEKPQLNLVQPQGQAELIAEAEEKLTHINSSYTLNDYFLPRGFANLYVSGVGTKDSTGFMTNGDYQQIEAYKNVIDWLNGRCRAFTDHTRQRQVKADWSNGKVATTGLSYLGTMSNGLATTGVDGLEVIIAEAGISSWYNYYRENGLVTSPGGYPGEDFDSLAELTYSRNLLAGDYIRGNEAHQADLEKVKAQLDRKTGDYNQFWHDRNYLLNAHKVKAEVVFTHGSQDWNVKPLHVYQMFHALPTHIHKHLFFHNGAHVYMNNWQSIDFRESINALLTKKLLGQETDFQLPTVIWQDNTAPQTWLSLDNFGGQENCKTFSLGQEEQAIQNQYPDKDFERYSKTYQTFNTELYQGKANQITINLPVTKDLHLNGRAQLNLRIKSSTNKGLLSAQLLEFGQKKYLQPYPAILSARTIDNGRYHMLENLCELPFRPEAQRVVTKGYLNLQNRNDLLLVEDITADEWMDVQFELQPTIYKLKEGDTLRLVLYTTDFEITIRDNTDYHLTVDLAQSMLTLPC.

Catalysis depends on charge relay system residues Ser348, Asp468, and His498.

This sequence belongs to the peptidase S15 family. As to quaternary structure, homodimer.

It localises to the cytoplasm. The catalysed reaction is Hydrolyzes Xaa-Pro-|- bonds to release unblocked, N-terminal dipeptides from substrates including Ala-Pro-|-p-nitroanilide and (sequentially) Tyr-Pro-|-Phe-Pro-|-Gly-Pro-|-Ile.. In terms of biological role, removes N-terminal dipeptides sequentially from polypeptides having unsubstituted N-termini provided that the penultimate residue is proline. The protein is Xaa-Pro dipeptidyl-peptidase of Streptococcus pneumoniae (strain P1031).